The sequence spans 95 residues: Aspartyl/glutamyl-tRNA(Asn/Gln) amidotransferase subunit C (95 aa).

It belongs to the GatC family. As to quaternary structure, heterotrimer of A, B and C subunits.

The catalysed reaction is L-glutamyl-tRNA(Gln) + L-glutamine + ATP + H2O = L-glutaminyl-tRNA(Gln) + L-glutamate + ADP + phosphate + H(+). It carries out the reaction L-aspartyl-tRNA(Asn) + L-glutamine + ATP + H2O = L-asparaginyl-tRNA(Asn) + L-glutamate + ADP + phosphate + 2 H(+). Allows the formation of correctly charged Asn-tRNA(Asn) or Gln-tRNA(Gln) through the transamidation of misacylated Asp-tRNA(Asn) or Glu-tRNA(Gln) in organisms which lack either or both of asparaginyl-tRNA or glutaminyl-tRNA synthetases. The reaction takes place in the presence of glutamine and ATP through an activated phospho-Asp-tRNA(Asn) or phospho-Glu-tRNA(Gln). The sequence is that of Aspartyl/glutamyl-tRNA(Asn/Gln) amidotransferase subunit C from Chlorobaculum tepidum (strain ATCC 49652 / DSM 12025 / NBRC 103806 / TLS) (Chlorobium tepidum).